A 250-amino-acid chain; its full sequence is Imidazole glycerol phosphate synthase subunit HisF (250 aa).

Active-site residues include D11 and D130.

The protein belongs to the HisA/HisF family. Heterodimer of HisH and HisF.

The protein localises to the cytoplasm. The catalysed reaction is 5-[(5-phospho-1-deoxy-D-ribulos-1-ylimino)methylamino]-1-(5-phospho-beta-D-ribosyl)imidazole-4-carboxamide + L-glutamine = D-erythro-1-(imidazol-4-yl)glycerol 3-phosphate + 5-amino-1-(5-phospho-beta-D-ribosyl)imidazole-4-carboxamide + L-glutamate + H(+). Its pathway is amino-acid biosynthesis; L-histidine biosynthesis; L-histidine from 5-phospho-alpha-D-ribose 1-diphosphate: step 5/9. IGPS catalyzes the conversion of PRFAR and glutamine to IGP, AICAR and glutamate. The HisF subunit catalyzes the cyclization activity that produces IGP and AICAR from PRFAR using the ammonia provided by the HisH subunit. This chain is Imidazole glycerol phosphate synthase subunit HisF, found in Elusimicrobium minutum (strain Pei191).